Consider the following 260-residue polypeptide: Dehydrogenase/reductase SDR family member 11 (260 aa).

A signal peptide spans 1–30 (MTRAGMERWRDRLALVTGASGGIGAAVARA). NADP(+) contacts are provided by residues 18–23 (GASGGI), 43–44 (RT), glutamate 49, 70–71 (DL), and asparagine 97. Positions 151 and 166 each coordinate substrate. NADP(+)-binding positions include tyrosine 166, lysine 170, 201-204 (VETQ), and lysine 208. The active-site Proton acceptor is the tyrosine 166.

It belongs to the short-chain dehydrogenases/reductases (SDR) family. As to quaternary structure, homotetramer.

The protein localises to the secreted. It carries out the reaction a 3beta-hydroxysteroid + NADP(+) = a 3-oxosteroid + NADPH + H(+). It catalyses the reaction 17beta-estradiol + NAD(+) = estrone + NADH + H(+). The enzyme catalyses 17beta-estradiol + NADP(+) = estrone + NADPH + H(+). It participates in steroid biosynthesis; estrogen biosynthesis. Inhibited by flavonoids including apigenin, luteolin, genistein, kaempferol and quercetin and also by carbenoxolone, zearalenone, glycyrrhetinic, curcumin and flufenamic acid. Catalyzes the conversion of the 17-keto group of estrone, 4- and 5-androstenes and 5-alpha-androstanes into their 17-beta-hydroxyl metabolites and the conversion of the 3-keto group of 3-, 3,17- and 3,20- diketosteroids into their 3-hydroxyl metabolites. Exhibits reductive 3-beta-hydroxysteroid dehydrogenase activity toward 5-beta-androstanes, 5-beta-pregnanes, 4-pregnenes and bile acids. May also reduce endogenous and exogenous alpha-dicarbonyl compounds and xenobiotic alicyclic ketones. The polypeptide is Dehydrogenase/reductase SDR family member 11 (Dhrs11) (Mus musculus (Mouse)).